The chain runs to 359 residues: MQAAALPEEIRWLLEDAEEFLAEGLRNENLSAVARDHRDHILRGFQQIKARYYWDFQPQGGDIGQDSSDDNHSGTLGLSLTSDAPFLSDYQDEGMEDIVKGAQELDNVIKQGYLEKKSKDHSFFGSEWQKRWCVVSRGLFYYYANEKSKQPKGTFLIKGYGVRMAPHLRRDSKKESCFELTSQDRRSYEFTATSPAEARDWVDQISFLLKDLSSLTIPYEEDEEEEEKEETYDDIDGFDSPSCGSQCRPTILPGSVGIKEPTEEKEEEDIYEVLPDEEHDLEEDESGTRRKGVDYASYYQGLWDCHGDQPDELSFQRGDLIRILSKEYNMYGWWVGELNSLVGIVPKEYLTTAFEVEER.

The PH domain occupies 107–210; sequence NVIKQGYLEK…WVDQISFLLK (104 aa). A phosphotyrosine mark is found at tyrosine 142, tyrosine 219, and tyrosine 232. Residues 219-237 are compositionally biased toward acidic residues; sequence YEEDEEEEEKEETYDDIDG. The segment at 219 to 239 is disordered; the sequence is YEEDEEEEEKEETYDDIDGFD. Phosphotyrosine; by FYN is present on residues tyrosine 271 and tyrosine 295. Residues 290–295 are interaction with FYB1; it reads RKGVDY. Residues 294 to 355 enclose the SH3 domain; it reads DYASYYQGLW…PKEYLTTAFE (62 aa).

This sequence belongs to the SKAP family. In terms of assembly, homodimer. Interacts with FYN. Interacts with PTPRC. Interacts with GRB2 when phosphorylated on Tyr-271. Interacts with FYB1, which is required for SKAP2 protein stability. Part of a complex consisting of SKAP1, FYB1 and CLNK. Interacts with RASGRP1. Interacts with FYB2. Phosphorylated on tyrosines. Phosphorylation by FYN on Tyr-271 is required for GRB2 interaction. Phosphorylation by FYN on Tyr-295 abolishes interaction with FYB1. Tyr-232 is dephosphorylated by PTPRC. Highly expressed in thymocytes and peripheral blood lymphocytes. Also expressed in spleen cells and testis. Present in T-cells (at protein level).

The protein resides in the cytoplasm. It is found in the nucleus. The protein localises to the cell membrane. Its function is as follows. Positively regulates T-cell receptor signaling by enhancing the MAP kinase pathway. Required for optimal conjugation between T-cells and antigen-presenting cells by promoting the clustering of integrin ITGAL on the surface of T-cells. May be involved in high affinity immunoglobulin epsilon receptor signaling in mast cells. The sequence is that of Src kinase-associated phosphoprotein 1 (SKAP1) from Homo sapiens (Human).